A 202-amino-acid polypeptide reads, in one-letter code: LexA repressor (202 aa).

The H-T-H motif DNA-binding region spans 28 to 47; sequence IREIGDQFGITAKGAYDHLK. Active-site for autocatalytic cleavage activity residues include serine 126 and lysine 163.

It belongs to the peptidase S24 family. As to quaternary structure, homodimer.

It carries out the reaction Hydrolysis of Ala-|-Gly bond in repressor LexA.. In terms of biological role, represses a number of genes involved in the response to DNA damage (SOS response), including recA and lexA. In the presence of single-stranded DNA, RecA interacts with LexA causing an autocatalytic cleavage which disrupts the DNA-binding part of LexA, leading to derepression of the SOS regulon and eventually DNA repair. The polypeptide is LexA repressor (Leptospira biflexa serovar Patoc (strain Patoc 1 / Ames)).